Here is a 429-residue protein sequence, read N- to C-terminus: GTPase Obg (429 aa).

The Obg domain maps to M1–L158. The OBG-type G domain occupies A159–S329. GTP contacts are provided by residues G165 to S172, F190 to T194, D212 to G215, N282 to D285, and S310 to L312. Mg(2+) is bound by residues S172 and T192. The OCT domain maps to I344–D421.

It belongs to the TRAFAC class OBG-HflX-like GTPase superfamily. OBG GTPase family. Monomer. The cofactor is Mg(2+).

It localises to the cytoplasm. Its function is as follows. An essential GTPase which binds GTP, GDP and possibly (p)ppGpp with moderate affinity, with high nucleotide exchange rates and a fairly low GTP hydrolysis rate. Plays a role in control of the cell cycle, stress response, ribosome biogenesis and in those bacteria that undergo differentiation, in morphogenesis control. The protein is GTPase Obg of Carboxydothermus hydrogenoformans (strain ATCC BAA-161 / DSM 6008 / Z-2901).